We begin with the raw amino-acid sequence, 614 residues long: Dihydroxy-acid dehydratase (614 aa).

Position 81 (Asp81) interacts with Mg(2+). Position 122 (Cys122) interacts with [2Fe-2S] cluster. Mg(2+) is bound by residues Asp123 and Lys124. An N6-carboxylysine modification is found at Lys124. [2Fe-2S] cluster is bound at residue Cys193. Position 489 (Glu489) interacts with Mg(2+). Ser515 (proton acceptor) is an active-site residue.

Belongs to the IlvD/Edd family. As to quaternary structure, homodimer. [2Fe-2S] cluster is required as a cofactor. It depends on Mg(2+) as a cofactor.

It carries out the reaction (2R)-2,3-dihydroxy-3-methylbutanoate = 3-methyl-2-oxobutanoate + H2O. The enzyme catalyses (2R,3R)-2,3-dihydroxy-3-methylpentanoate = (S)-3-methyl-2-oxopentanoate + H2O. It functions in the pathway amino-acid biosynthesis; L-isoleucine biosynthesis; L-isoleucine from 2-oxobutanoate: step 3/4. Its pathway is amino-acid biosynthesis; L-valine biosynthesis; L-valine from pyruvate: step 3/4. Functions in the biosynthesis of branched-chain amino acids. Catalyzes the dehydration of (2R,3R)-2,3-dihydroxy-3-methylpentanoate (2,3-dihydroxy-3-methylvalerate) into 2-oxo-3-methylpentanoate (2-oxo-3-methylvalerate) and of (2R)-2,3-dihydroxy-3-methylbutanoate (2,3-dihydroxyisovalerate) into 2-oxo-3-methylbutanoate (2-oxoisovalerate), the penultimate precursor to L-isoleucine and L-valine, respectively. This Marinomonas sp. (strain MWYL1) protein is Dihydroxy-acid dehydratase.